Consider the following 809-residue polypeptide: Leucine--tRNA ligase (809 aa).

Residues 40 to 50 carry the 'HIGH' region motif; that stretch reads PYPSGRIHMGH. The short motif at 579-583 is the 'KMSKS' region element; it reads KMSKS. An ATP-binding site is contributed by lysine 582.

The protein belongs to the class-I aminoacyl-tRNA synthetase family.

It is found in the cytoplasm. It catalyses the reaction tRNA(Leu) + L-leucine + ATP = L-leucyl-tRNA(Leu) + AMP + diphosphate. This is Leucine--tRNA ligase from Campylobacter jejuni subsp. jejuni serotype O:23/36 (strain 81-176).